The chain runs to 440 residues: L-gulonolactone oxidase (440 aa).

The FAD-binding PCMH-type domain occupies 17-187 (YGCSPEMYYQ…LTVTLQCVPQ (171 aa)). H54 carries the pros-8alpha-FAD histidine modification. Residues 251 to 273 (IGFYLLEFLLWTSTYLPRLVGWI) traverse the membrane as a helical segment.

The protein belongs to the oxygen-dependent FAD-linked oxidoreductase family. FAD serves as cofactor. As to expression, highly expressed in liver.

The protein localises to the microsome membrane. Its subcellular location is the endoplasmic reticulum membrane. The catalysed reaction is L-gulono-1,4-lactone + O2 = L-ascorbate + H2O2 + H(+). Its pathway is cofactor biosynthesis; L-ascorbate biosynthesis via UDP-alpha-D-glucuronate pathway; L-ascorbate from UDP-alpha-D-glucuronate: step 4/4. Functionally, oxidizes L-gulono-1,4-lactone to hydrogen peroxide and L-xylo-hexulonolactone which spontaneously isomerizes to L-ascorbate. The chain is L-gulonolactone oxidase (Gulo) from Mus musculus (Mouse).